A 767-amino-acid chain; its full sequence is Transducin-like enhancer protein 2 (767 aa).

The interval 1–152 is q domain; it reads MYPQGRHPTP…SLLGQQNQLQ (152 aa). A GP domain region spans residues 153 to 215; the sequence is PLSHAPPVPL…SRVDRAASRS (63 aa). Positions 198–212 are enriched in basic and acidic residues; that stretch reads RVGVDAEGSRVDRAA. Disordered stretches follow at residues 198–257, 264–283, and 296–346; these read RVGV…EEDK, VDED…CGKA, and SPAS…SSAS. The ccN domain stretch occupies residues 216-279; the sequence is SSPSPPESLV…SEPPSPVTTP (64 aa). The Nuclear localization signal motif lies at 238–242; sequence KQQRA. Ser253 carries the post-translational modification Phosphoserine; by CK2. Phosphoserine; by CDK1 is present on Ser274. Thr278 carries the post-translational modification Phosphothreonine; by CDK1. The SP domain stretch occupies residues 280 to 447; sequence CGKAPLCIPA…VAKPAYSFHV (168 aa). Low complexity predominate over residues 296 to 309; sequence SPASLASSLGSPLP. Phosphoserine is present on Ser306. Over residues 323–346 the composition is skewed to polar residues; sequence TPASRSCGTSPPQDSSTPGPSSAS. WD repeat units lie at residues 479–517, 525–564, 569–608, 611–650, 693–732, and 734–766; these read AHGE…SKTP, NRDN…PRIK, SSAP…MVRQ, GHTD…QLQQ, LHES…SIFQ, and KESS…YEVV.

Belongs to the WD repeat Groucho/TLE family. As to quaternary structure, homooligomer and heterooligomer with other family members. Binds LEF1, TCF7, TCF7L1, TCF7L2, UTY, HES1 and HES5. In terms of processing, ubiquitinated by XIAP/BIRC4. As to expression, expressed in bone marrow-derived macrophages.

The protein localises to the nucleus. Its function is as follows. Transcriptional corepressor that binds to a number of transcription factors. Inhibits the transcriptional activation mediated by CTNNB1 and TCF family members in Wnt signaling. The effects of full-length TLE family members may be modulated by association with dominant-negative AES. The sequence is that of Transducin-like enhancer protein 2 (Tle2) from Mus musculus (Mouse).